A 288-amino-acid polypeptide reads, in one-letter code: Bifunctional protein MdtA (288 aa).

Residues 129–132 (TGPV), 152–156 (RKLDK), 195–198 (TAGA), and K256 each bind NADP(+).

As to quaternary structure, homotrimer.

The protein localises to the cytoplasm. The catalysed reaction is 5,10-methylenetetrahydromethanopterin + NADP(+) = 5,10-methenyl-5,6,7,8-tetrahydromethanopterin + NADPH. It catalyses the reaction (6R)-5,10-methylene-5,6,7,8-tetrahydrofolate + NADP(+) = (6R)-5,10-methenyltetrahydrofolate + NADPH. It participates in one-carbon metabolism; formaldehyde degradation; formate from formaldehyde (H(4)MPT route): step 2/5. Functionally, catalyzes the dehydrogenation of methylene-H(4)MPT. Can also catalyze the reversible dehydrogenation of methylene-H(4)F with 20-fold lower catalytic efficiency. This is Bifunctional protein MdtA from Methylorubrum extorquens (strain ATCC 14718 / DSM 1338 / JCM 2805 / NCIMB 9133 / AM1) (Methylobacterium extorquens).